Consider the following 130-residue polypeptide: Small ribosomal subunit protein uS8 (130 aa).

This sequence belongs to the universal ribosomal protein uS8 family. As to quaternary structure, part of the 30S ribosomal subunit. Contacts proteins S5 and S12.

In terms of biological role, one of the primary rRNA binding proteins, it binds directly to 16S rRNA central domain where it helps coordinate assembly of the platform of the 30S subunit. This is Small ribosomal subunit protein uS8 from Cereibacter sphaeroides (strain KD131 / KCTC 12085) (Rhodobacter sphaeroides).